The chain runs to 289 residues: MRPTPTLAEFLHAPLTTIRQVAPATMVFSSGGSRRKAALANMSAAGEEYARWSHQQLLKCLELFFSHGIKHLFLPMLLPNQFQETTPNYREHIEQWVAWGAASQTMLEYYQEHNWRVRLLDTQYSPILADAAQRLQQPYDHPDQPTLWWFVVRDSEDPWQIIFQAAQKTVFKTRSQAIEAIYGEPIPPAELFVSFGKPQVNHDLLPPLLVGELQCYWTQKPGYTLSEEEFRQILYDFAFLRKTWQVDKTERTQAALAFRQHWERGPILGLGQQLGPFWYPQSTSIESEL.

The protein belongs to the diterpene synthase family.

It carries out the reaction (+)-kolavenyl diphosphate + H2O = (+)-kolavelool + diphosphate. Functionally, involved in the biosynthesis of (+)-O-methylkolavelool. Catalyzes the biosynthesis of (+)-kolavelool from (+)-kolavenyl diphosphate via the release of the diphosphate moiety through the nucleophilic addition of a water molecule. The sequence is that of (+)-kolavelool synthase from Herpetosiphon aurantiacus (strain ATCC 23779 / DSM 785 / 114-95).